A 534-amino-acid chain; its full sequence is Cytochrome P450 monooxygenase vrtK (534 aa).

Cys-448 is a binding site for heme.

The protein belongs to the cytochrome P450 family. Heme serves as cofactor.

Its pathway is secondary metabolite biosynthesis; terpenoid biosynthesis. In terms of biological role, cytochrome P450 monooxygenase; part of the gene cluster that mediates the biosynthesis of viridicatumtoxin, a tetracycline-like fungal meroterpenoid with a unique, fused spirobicyclic ring system. The first step of the pathway is the production of the malonamoyl-CoA starter unit for the polyketide synthase vrtA. The aldolase vrtJ may be involved in the synthesis of the malonamate substrate for malonamoyl-CoA synthetase vrtB. The polyketide synthase vrtA then may utilize the malonamoyl-CoA starter unit, followed by sequential condensation of eight malonyl-CoA units to form the polyketide backbone. The cyclization of the last ring could be mediated by the lactamase-like protein vrtG. The proposed post-PKS tailoring steps are a hydroxylation at C5 catalyzed the cytochrome P450 monooxygenase vrtE, a hydroxylation at C12a catalyzed by VrtH and/or VrtI, and an O-methylation by the O-methyltransferase vrtF. VrtC is then proposed to catalyze the transfer of a geranyl group synthesized by vrtD to the aromatic C ring of the tetracyclic polyketide intermediate of viridicatumtoxin to yield previridicatumtoxin. Finally, the cytochrome P450 monooxygenase vrtK catalyzes the spirocyclization of the geranyl moiety of previridicatumtoxin to afford viridicatumtoxin. The protein is Cytochrome P450 monooxygenase vrtK of Penicillium aethiopicum.